Here is a 124-residue protein sequence, read N- to C-terminus: Small ribosomal subunit protein uS12 (124 aa).

A 3-methylthioaspartic acid modification is found at aspartate 90.

This sequence belongs to the universal ribosomal protein uS12 family. As to quaternary structure, part of the 30S ribosomal subunit. Contacts proteins S8 and S17. May interact with IF1 in the 30S initiation complex.

In terms of biological role, with S4 and S5 plays an important role in translational accuracy. Functionally, interacts with and stabilizes bases of the 16S rRNA that are involved in tRNA selection in the A site and with the mRNA backbone. Located at the interface of the 30S and 50S subunits, it traverses the body of the 30S subunit contacting proteins on the other side and probably holding the rRNA structure together. The combined cluster of proteins S8, S12 and S17 appears to hold together the shoulder and platform of the 30S subunit. The chain is Small ribosomal subunit protein uS12 from Wolbachia sp. subsp. Brugia malayi (strain TRS).